The following is a 218-amino-acid chain: ADP-sugar pyrophosphatase (218 aa).

An N-acetylmethionine modification is found at methionine 1. A Phosphoserine modification is found at serine 10. Tryptophan 27 serves as a coordination point for substrate. Lysine 41 is covalently cross-linked (Glycyl lysine isopeptide (Lys-Gly) (interchain with G-Cter in SUMO2)). Phosphothreonine is present on threonine 44. Substrate-binding positions include tryptophan 45 to glutamate 46 and arginine 83. The region spanning lysine 56–valine 196 is the Nudix hydrolase domain. A Mg(2+)-binding site is contributed by alanine 95. The Nudix box signature appears at glycine 96–glycine 117. Phenylalanine 97 lines the substrate pocket. Mg(2+) contacts are provided by glutamate 111 and glutamate 115. Residue aspartate 132 coordinates substrate. Position 165 (glutamate 165) interacts with Mg(2+). Lysine 209 and lysine 217 each carry N6-acetyllysine.

Belongs to the Nudix hydrolase family. Homodimer. Interacts with PARG. Mg(2+) serves as cofactor. In terms of processing, phosphorylation at Thr-44 is required for homodimer stability; dephosphorylation results in destabilization of the homodimer. Dephosphorylation at Thr-44 promotes the ATP-synthesis activity. As to expression, widely expressed. Most abundant in liver.

The protein resides in the nucleus. It catalyses the reaction D-ribose 5-phosphate + ATP + H(+) = ADP-D-ribose + diphosphate. It carries out the reaction ADP-D-ribose + H2O = D-ribose 5-phosphate + AMP + 2 H(+). The enzyme catalyses 8-oxo-dGDP + H2O = 8-oxo-dGMP + phosphate + H(+). In terms of biological role, enzyme that can either act as an ADP-sugar pyrophosphatase in absence of diphosphate or catalyze the synthesis of ATP in presence of diphosphate. In absence of diphosphate, hydrolyzes with similar activities various modified nucleoside diphosphates such as ADP-ribose, ADP-mannose, ADP-glucose, 8-oxo-GDP and 8-oxo-dGDP. Can also hydrolyze other nucleotide sugars with low activity. In presence of diphosphate, mediates the synthesis of ATP in the nucleus by catalyzing the conversion of ADP-ribose to ATP and ribose 5-phosphate. Nuclear ATP synthesis takes place when dephosphorylated at Thr-44. Nuclear ATP generation is required for extensive chromatin remodeling events that are energy-consuming. Does not play a role in U8 snoRNA decapping activity. Binds U8 snoRNA. The polypeptide is ADP-sugar pyrophosphatase (Mus musculus (Mouse)).